Reading from the N-terminus, the 61-residue chain is Potassium channel toxin alpha-KTx 6.7 (61 aa).

Positions 1 to 23 (MNAKFILLLLVVTTTMLLPDTQG) are cleaved as a signal peptide. Disulfide bonds link C29/C50, C35/C55, C39/C57, and C45/C60. C60 bears the Cysteine amide mark.

It belongs to the short scorpion toxin superfamily. Potassium channel inhibitor family. Alpha-KTx 06 subfamily. As to expression, expressed by the venom gland.

The protein localises to the secreted. Its function is as follows. Blocker of voltage-gated potassium channels. This Opistophthalmus carinatus (African yellow leg scorpion) protein is Potassium channel toxin alpha-KTx 6.7.